The sequence spans 448 residues: Zinc finger CCCH domain-containing protein 43 (448 aa).

Residues 1-106 are disordered; sequence MVNSEEIADG…GWSENESENV (106 aa). Over residues 24-45 the composition is skewed to basic and acidic residues; it reads SSHDRSLSDLNHAAEDLSDKLK. Residues 63-79 are compositionally biased toward polar residues; the sequence is VSESNGGLDSNAVVTIN. A compositionally biased stretch (acidic residues) spans 80–89; that stretch reads QEEEEEEEDR. 5 consecutive C3H1-type zinc fingers follow at residues 110–138, 158–186, 204–232, 346–374, and 392–420; these read RPGA…HPLA, KLGL…HTIP, RPGE…HPDP, RPDQ…HPKN, and RPDQ…HSVQ. The interval 424 to 448 is disordered; it reads STESSQAIVEPPQVSANGNESDGWN. Positions 437 to 448 are enriched in polar residues; it reads VSANGNESDGWN.

The protein resides in the nucleus. This is Zinc finger CCCH domain-containing protein 43 from Arabidopsis thaliana (Mouse-ear cress).